A 492-amino-acid chain; its full sequence is FAD-containing monooxygenase EthA (492 aa).

Residues S15, E36, 44–47, D56, and V104 contribute to the FAD site; that span reads TWDL. 54-56 lines the NADP(+) pocket; it reads RSD. NADP(+) contacts are provided by residues 183 to 189 and 207 to 208; these read SGATAVT and RS.

It belongs to the FAD-binding monooxygenase family. The cofactor is FAD.

It is found in the cell membrane. The enzyme catalyses ethionamide + NADPH + O2 + H(+) = ethionamide S-oxide + NADP(+) + H2O. Functionally, monooxygenase able to convert a wide range of ketones to the corresponding esters or lactones via a Baeyer-Villiger oxidation reaction. Can act on long-chain aliphatic ketones (2-hexanone to 2-dodecanone) and on aromatic ketones (phenylacetone and benzylacetone). Is also able to catalyze enantioselective sulfoxidation of methyl-p-tolylsulfide. In vivo, likely functions as a BVMO, but the exact nature of the physiological substrate(s) remains to be established. Is responsible for the activation of several thiocarbamide-containing pro-drugs, such as ethionamide (ETH), isoxyl (ISO) and thiacetazone (TAC), into reactive species. This chain is FAD-containing monooxygenase EthA (ethA), found in Mycolicibacterium smegmatis (strain ATCC 700084 / mc(2)155) (Mycobacterium smegmatis).